A 122-amino-acid polypeptide reads, in one-letter code: ATP synthase epsilon chain (122 aa).

This sequence belongs to the ATPase epsilon chain family. As to quaternary structure, F-type ATPases have 2 components, CF(1) - the catalytic core - and CF(0) - the membrane proton channel. CF(1) has five subunits: alpha(3), beta(3), gamma(1), delta(1), epsilon(1). CF(0) has three main subunits: a, b and c.

It localises to the cell membrane. Functionally, produces ATP from ADP in the presence of a proton gradient across the membrane. The protein is ATP synthase epsilon chain of Rhodococcus opacus (strain B4).